The chain runs to 278 residues: Putative phosphoenolpyruvate synthase regulatory protein (278 aa).

157-164 (GVSRSGKT) contacts ADP.

The protein belongs to the pyruvate, phosphate/water dikinase regulatory protein family. PSRP subfamily.

It catalyses the reaction [pyruvate, water dikinase] + ADP = [pyruvate, water dikinase]-phosphate + AMP + H(+). The enzyme catalyses [pyruvate, water dikinase]-phosphate + phosphate + H(+) = [pyruvate, water dikinase] + diphosphate. In terms of biological role, bifunctional serine/threonine kinase and phosphorylase involved in the regulation of the phosphoenolpyruvate synthase (PEPS) by catalyzing its phosphorylation/dephosphorylation. The chain is Putative phosphoenolpyruvate synthase regulatory protein from Vibrio parahaemolyticus serotype O3:K6 (strain RIMD 2210633).